Here is a 269-residue protein sequence, read N- to C-terminus: Undecaprenyl-diphosphatase (269 aa).

7 helical membrane-spanning segments follow: residues 42-62 (WDTF…ALYF), 83-103 (LTVL…HGVI), 110-130 (PYLP…LLVV), 142-162 (GMAL…LSLL), 186-206 (AEFS…LDLL), 219-239 (AIAI…KFLI), and 247-267 (FTPF…LIYI).

The protein belongs to the UppP family.

It localises to the cell inner membrane. It carries out the reaction di-trans,octa-cis-undecaprenyl diphosphate + H2O = di-trans,octa-cis-undecaprenyl phosphate + phosphate + H(+). Catalyzes the dephosphorylation of undecaprenyl diphosphate (UPP). Confers resistance to bacitracin. The chain is Undecaprenyl-diphosphatase from Caulobacter sp. (strain K31).